The sequence spans 256 residues: Imidazole glycerol phosphate synthase subunit HisF (256 aa).

Residues Asp-12 and Asp-131 contribute to the active site.

This sequence belongs to the HisA/HisF family. As to quaternary structure, heterodimer of HisH and HisF.

Its subcellular location is the cytoplasm. It carries out the reaction 5-[(5-phospho-1-deoxy-D-ribulos-1-ylimino)methylamino]-1-(5-phospho-beta-D-ribosyl)imidazole-4-carboxamide + L-glutamine = D-erythro-1-(imidazol-4-yl)glycerol 3-phosphate + 5-amino-1-(5-phospho-beta-D-ribosyl)imidazole-4-carboxamide + L-glutamate + H(+). It participates in amino-acid biosynthesis; L-histidine biosynthesis; L-histidine from 5-phospho-alpha-D-ribose 1-diphosphate: step 5/9. Functionally, IGPS catalyzes the conversion of PRFAR and glutamine to IGP, AICAR and glutamate. The HisF subunit catalyzes the cyclization activity that produces IGP and AICAR from PRFAR using the ammonia provided by the HisH subunit. The chain is Imidazole glycerol phosphate synthase subunit HisF from Pseudomonas entomophila (strain L48).